The chain runs to 104 residues: Iron-sulfur cluster assembly protein CyaY (104 aa).

This sequence belongs to the frataxin family.

In terms of biological role, involved in iron-sulfur (Fe-S) cluster assembly. May act as a regulator of Fe-S biogenesis. This chain is Iron-sulfur cluster assembly protein CyaY, found in Vibrio atlanticus (strain LGP32) (Vibrio splendidus (strain Mel32)).